A 351-amino-acid polypeptide reads, in one-letter code: Sulfate/thiosulfate import ATP-binding protein CysA (351 aa).

Residues 5 to 235 (IVVADATKRY…PANAFVMSFL (231 aa)) form the ABC transporter domain. 37–44 (GPSGSGKS) is a binding site for ATP.

This sequence belongs to the ABC transporter superfamily. Sulfate/tungstate importer (TC 3.A.1.6) family. As to quaternary structure, the complex is composed of two ATP-binding proteins (CysA), two transmembrane proteins (CysT and CysW) and a solute-binding protein (CysP).

It localises to the cell membrane. It catalyses the reaction sulfate(out) + ATP + H2O = sulfate(in) + ADP + phosphate + H(+). The catalysed reaction is thiosulfate(out) + ATP + H2O = thiosulfate(in) + ADP + phosphate + H(+). Part of the ABC transporter complex CysAWTP involved in sulfate/thiosulfate import. Responsible for energy coupling to the transport system. This chain is Sulfate/thiosulfate import ATP-binding protein CysA, found in Mycobacterium bovis (strain ATCC BAA-935 / AF2122/97).